Reading from the N-terminus, the 172-residue chain is Large ribosomal subunit protein uL10 (172 aa).

Belongs to the universal ribosomal protein uL10 family. As to quaternary structure, part of the ribosomal stalk of the 50S ribosomal subunit. The N-terminus interacts with L11 and the large rRNA to form the base of the stalk. The C-terminus forms an elongated spine to which L12 dimers bind in a sequential fashion forming a multimeric L10(L12)X complex.

Forms part of the ribosomal stalk, playing a central role in the interaction of the ribosome with GTP-bound translation factors. The protein is Large ribosomal subunit protein uL10 of Chlamydia trachomatis serovar L2 (strain ATCC VR-902B / DSM 19102 / 434/Bu).